Reading from the N-terminus, the 642-residue chain is uncharacterized protein (642 aa).

The Cytoplasmic segment spans residues 1–15; sequence MVHITLGQAIWVSVK. Residues 16-36 form a helical membrane-spanning segment; that stretch reads PIIKIYLIIGVGFLMAKMGIL. Residues 37–42 lie on the Extracellular side of the membrane; that stretch reads TVEATR. Residues 43 to 63 traverse the membrane as a helical segment; the sequence is IISDIVLTVLLPSLSFNKIVA. Residues 64–73 are Cytoplasmic-facing; it reads NIEDKDIKSV. Residues 74–94 form a helical membrane-spanning segment; the sequence is GIICLSALLIFGSGFFFAYVV. At 95–104 the chain is on the extracellular side; sequence RLFLPVPKQW. A helical transmembrane segment spans residues 105-125; it reads YGGILAGGMFPNISDLPIAYL. At 126–142 the chain is on the cytoplasmic side; that stretch reads QSMDQGLVFSEEEGNKG. A helical transmembrane segment spans residues 143–163; sequence VANVIIFLTMFLICIFNLGGF. Over 164-460 the chain is Extracellular; the sequence is RLIESDFEYN…FLKNCLRPCS (297 aa). 2 disordered regions span residues 183–206 and 227–324; these read ETTKTQPAVSANTTNTDTSERFFS and GTKG…SQPR. Polar residues-rich tracts occupy residues 240 to 260 and 272 to 312; these read RRSTNSIAPLSLPDTSSNSKI and IACT…SSID. The chain crosses the membrane as a helical span at residues 461 to 481; sequence MAVIIALTVAFIPWVKALFVT. At 482 to 499 the chain is on the cytoplasmic side; that stretch reads TANTPHISQAPDNAPPLS. Residues 500 to 520 form a helical membrane-spanning segment; it reads FFMDFTGYVGAACVPFGLILL. The Extracellular portion of the chain corresponds to 521–538; that stretch reads GATLGRLKIGNLYPGFWK. A helical membrane pass occupies residues 539 to 559; the sequence is AAVTLVILRQCVMPIFGVLWC. Residues 560–574 lie on the Cytoplasmic side of the membrane; that stretch reads DRLVKAGWVNWQDDR. The helical transmembrane segment at 575–595 threads the bilayer; it reads MLLFVIAISWNLPTMTTLIYF. Over 596–614 the chain is Extracellular; it reads TASFTPPETTAPIQMECVS. The helical transmembrane segment at 615–635 threads the bilayer; that stretch reads FFLMLQYPLMVVSLPFLVSYF. The Cytoplasmic portion of the chain corresponds to 636–642; the sequence is LKVQMNL.

The protein belongs to the auxin efflux carrier (TC 2.A.69) family.

The protein resides in the membrane. This is an uncharacterized protein from Saccharomyces cerevisiae (strain ATCC 204508 / S288c) (Baker's yeast).